A 478-amino-acid chain; its full sequence is Aspartyl/glutamyl-tRNA(Asn/Gln) amidotransferase subunit B (478 aa).

It belongs to the GatB/GatE family. GatB subfamily. In terms of assembly, heterotrimer of A, B and C subunits.

The catalysed reaction is L-glutamyl-tRNA(Gln) + L-glutamine + ATP + H2O = L-glutaminyl-tRNA(Gln) + L-glutamate + ADP + phosphate + H(+). It carries out the reaction L-aspartyl-tRNA(Asn) + L-glutamine + ATP + H2O = L-asparaginyl-tRNA(Asn) + L-glutamate + ADP + phosphate + 2 H(+). Allows the formation of correctly charged Asn-tRNA(Asn) or Gln-tRNA(Gln) through the transamidation of misacylated Asp-tRNA(Asn) or Glu-tRNA(Gln) in organisms which lack either or both of asparaginyl-tRNA or glutaminyl-tRNA synthetases. The reaction takes place in the presence of glutamine and ATP through an activated phospho-Asp-tRNA(Asn) or phospho-Glu-tRNA(Gln). In Brevibacillus brevis (strain 47 / JCM 6285 / NBRC 100599), this protein is Aspartyl/glutamyl-tRNA(Asn/Gln) amidotransferase subunit B.